Here is a 410-residue protein sequence, read N- to C-terminus: Gamma-glutamyl phosphate reductase (410 aa).

The protein belongs to the gamma-glutamyl phosphate reductase family.

Its subcellular location is the cytoplasm. It carries out the reaction L-glutamate 5-semialdehyde + phosphate + NADP(+) = L-glutamyl 5-phosphate + NADPH + H(+). The protein operates within amino-acid biosynthesis; L-proline biosynthesis; L-glutamate 5-semialdehyde from L-glutamate: step 2/2. Its function is as follows. Catalyzes the NADPH-dependent reduction of L-glutamate 5-phosphate into L-glutamate 5-semialdehyde and phosphate. The product spontaneously undergoes cyclization to form 1-pyrroline-5-carboxylate. The polypeptide is Gamma-glutamyl phosphate reductase (Sulfurovum sp. (strain NBC37-1)).